A 135-amino-acid polypeptide reads, in one-letter code: MRKHRIVSLVAALLVLLALAAVSSTRSTQKESVADNAGMLAGGIKDVPANENDLQLQELARFAVNEHNQKANALLGFEKLVKAKTQVVAGTMYYLTIEVKDGEVKKLYEAKVWEKPWENFKQLQEFKPVEEGASA.

An N-terminal signal peptide occupies residues 1–24 (MRKHRIVSLVAALLVLLALAAVSS). Positions 86 to 90 (QVVAG) match the Secondary area of contact motif.

The protein belongs to the cystatin family. Phytocystatin subfamily.

This Zea mays (Maize) protein is Cystatin-1 (RAMDAZC7).